A 194-amino-acid chain; its full sequence is MEEKLKKTKIIFVVGGPGSGKGTQCEKIVQKYGYTHLSTGDLLRSEVSSGSARGKKLSEIMEKGQLVPLETVLDMLRDAMVAKVNTSKGFLIDGYPREVQQGEEFERRIGQPTLLLYVDAGPETMTQRLLKRGETSGRVDDNEETIKKRLETYYKATEPVIAFYEKRGIVRKVNAEGSVDSVFSQVCTHLDALK.

M1 is subject to N-acetylmethionine. 18–23 (GSGKGT) contributes to the ATP binding site. S38 carries the phosphoserine modification. The tract at residues 38-67 (STGDLLRSEVSSGSARGKKLSEIMEKGQLV) is NMP. Residues T39, R44, 65–67 (QLV), 94–97 (GYPR), and Q101 contribute to the AMP site. The segment at 131–141 (KRGETSGRVDD) is LID. R132 is an ATP binding site. Residues R138 and R149 each contribute to the AMP site. G177 contributes to the ATP binding site.

It belongs to the adenylate kinase family. AK1 subfamily. In terms of assembly, monomer. Mg(2+) serves as cofactor.

It localises to the cytoplasm. It carries out the reaction a ribonucleoside 5'-phosphate + ATP = a ribonucleoside 5'-diphosphate + ADP. The enzyme catalyses AMP + ATP = 2 ADP. It catalyses the reaction dAMP + ATP = dADP + ADP. The catalysed reaction is dATP + AMP = dADP + ADP. It carries out the reaction dAMP + dATP = 2 dADP. The enzyme catalyses a 2'-deoxyribonucleoside 5'-diphosphate + ATP = a 2'-deoxyribonucleoside 5'-triphosphate + ADP. It catalyses the reaction a ribonucleoside 5'-diphosphate + ATP = a ribonucleoside 5'-triphosphate + ADP. The catalysed reaction is CDP + GTP = CTP + GDP. It carries out the reaction GDP + ATP = GTP + ADP. The enzyme catalyses UDP + ATP = UTP + ADP. It catalyses the reaction GTP + UDP = UTP + GDP. The catalysed reaction is dTDP + GTP = dTTP + GDP. It carries out the reaction dCDP + GTP = dCTP + GDP. The enzyme catalyses dGDP + ATP = dGTP + ADP. It catalyses the reaction dADP + GTP = dATP + GDP. The catalysed reaction is thiamine diphosphate + ADP = thiamine triphosphate + AMP. Its function is as follows. Catalyzes the reversible transfer of the terminal phosphate group between ATP and AMP. Also displays broad nucleoside diphosphate kinase activity. Plays an important role in cellular energy homeostasis and in adenine nucleotide metabolism. Also catalyzes at a very low rate the synthesis of thiamine triphosphate (ThTP) from thiamine diphosphate (ThDP) and ADP. The chain is Adenylate kinase isoenzyme 1 from Homo sapiens (Human).